The primary structure comprises 391 residues: Ferrochelatase (391 aa).

Positions 196 and 281 each coordinate Fe cation.

The protein belongs to the ferrochelatase family.

It is found in the cytoplasm. It carries out the reaction heme b + 2 H(+) = protoporphyrin IX + Fe(2+). The protein operates within porphyrin-containing compound metabolism; protoheme biosynthesis; protoheme from protoporphyrin-IX: step 1/1. Its function is as follows. Catalyzes the ferrous insertion into protoporphyrin IX. This chain is Ferrochelatase, found in Prochlorococcus marinus (strain MIT 9215).